The sequence spans 546 residues: CTP synthase (546 aa).

Residues 1–265 (MTKYVFVTGG…DEIVCHKLGI (265 aa)) are amidoligase domain. Residue Ser13 participates in CTP binding. Ser13 is a binding site for UTP. Residues 14–19 (SLGKGI) and Asp71 contribute to the ATP site. Positions 71 and 139 each coordinate Mg(2+). CTP is bound by residues 146–148 (DIE), 186–191 (KTKPTQ), and Lys222. Residues 186 to 191 (KTKPTQ) and Lys222 each bind UTP. Positions 290 to 543 (DIAFVGKYVD…VKAAIARHSA (254 aa)) constitute a Glutamine amidotransferase type-1 domain. Gly351 contacts L-glutamine. The active-site Nucleophile; for glutamine hydrolysis is Cys378. Residues 379–382 (LGMQ), Glu402, and Arg469 contribute to the L-glutamine site. Catalysis depends on residues His516 and Glu518.

This sequence belongs to the CTP synthase family. As to quaternary structure, homotetramer.

It carries out the reaction UTP + L-glutamine + ATP + H2O = CTP + L-glutamate + ADP + phosphate + 2 H(+). It catalyses the reaction L-glutamine + H2O = L-glutamate + NH4(+). The enzyme catalyses UTP + NH4(+) + ATP = CTP + ADP + phosphate + 2 H(+). Its pathway is pyrimidine metabolism; CTP biosynthesis via de novo pathway; CTP from UDP: step 2/2. Its activity is regulated as follows. Allosterically activated by GTP, when glutamine is the substrate; GTP has no effect on the reaction when ammonia is the substrate. The allosteric effector GTP functions by stabilizing the protein conformation that binds the tetrahedral intermediate(s) formed during glutamine hydrolysis. Inhibited by the product CTP, via allosteric rather than competitive inhibition. In terms of biological role, catalyzes the ATP-dependent amination of UTP to CTP with either L-glutamine or ammonia as the source of nitrogen. Regulates intracellular CTP levels through interactions with the four ribonucleotide triphosphates. The polypeptide is CTP synthase (Azoarcus sp. (strain BH72)).